We begin with the raw amino-acid sequence, 350 residues long: Histidinol-phosphate aminotransferase (350 aa).

The residue at position 220 (Lys-220) is an N6-(pyridoxal phosphate)lysine.

Belongs to the class-II pyridoxal-phosphate-dependent aminotransferase family. Histidinol-phosphate aminotransferase subfamily. As to quaternary structure, homodimer. The cofactor is pyridoxal 5'-phosphate.

It catalyses the reaction L-histidinol phosphate + 2-oxoglutarate = 3-(imidazol-4-yl)-2-oxopropyl phosphate + L-glutamate. It functions in the pathway amino-acid biosynthesis; L-histidine biosynthesis; L-histidine from 5-phospho-alpha-D-ribose 1-diphosphate: step 7/9. This is Histidinol-phosphate aminotransferase from Macrococcus caseolyticus (strain JCSC5402) (Macrococcoides caseolyticum).